The following is a 449-amino-acid chain: Chromosomal replication initiator protein DnaA (449 aa).

Residues 1 to 71 (MPSSLWKHCL…LLSHYSSGRI (71 aa)) are domain I, interacts with DnaA modulators. The segment at 71-112 (IEKALLEVGSCSLQPQPHIQAVELTSKSARSSSRVVDRIPES) is domain II. The tract at residues 113 to 329 (RLNKNYTFDS…GALRRVIAYS (217 aa)) is domain III, AAA+ region. Residues Gly-157, Gly-159, Lys-160, and Thr-161 each contribute to the ATP site. Positions 330–449 (RFTHRPITME…YHNLLKKLST (120 aa)) are domain IV, binds dsDNA.

The protein belongs to the DnaA family. Oligomerizes as a right-handed, spiral filament on DNA at oriC.

Its subcellular location is the cytoplasm. Plays an essential role in the initiation and regulation of chromosomal replication. ATP-DnaA binds to the origin of replication (oriC) to initiate formation of the DNA replication initiation complex once per cell cycle. Binds the DnaA box (a 9 base pair repeat at the origin) and separates the double-stranded (ds)DNA. Forms a right-handed helical filament on oriC DNA; dsDNA binds to the exterior of the filament while single-stranded (ss)DNA is stabiized in the filament's interior. The ATP-DnaA-oriC complex binds and stabilizes one strand of the AT-rich DNA unwinding element (DUE), permitting loading of DNA polymerase. After initiation quickly degrades to an ADP-DnaA complex that is not apt for DNA replication. Binds acidic phospholipids. The polypeptide is Chromosomal replication initiator protein DnaA (Nitrosococcus oceani (strain ATCC 19707 / BCRC 17464 / JCM 30415 / NCIMB 11848 / C-107)).